The primary structure comprises 347 residues: Eukaryotic translation initiation factor 3 subunit I (347 aa).

WD repeat units lie at residues 8–49 (GHER…GTYE), 50–89 (GHNG…CLFT), 146–186 (TFSG…PESG), 198–237 (AHTD…VIKT), 239–278 (ATET…GRFE), and 295–336 (GHFG…SKLY).

It belongs to the eIF-3 subunit I family. In terms of assembly, component of the eukaryotic translation initiation factor 3 (eIF-3) complex.

The protein resides in the cytoplasm. In terms of biological role, component of the eukaryotic translation initiation factor 3 (eIF-3) complex, which is involved in protein synthesis of a specialized repertoire of mRNAs and, together with other initiation factors, stimulates binding of mRNA and methionyl-tRNAi to the 40S ribosome. The eIF-3 complex specifically targets and initiates translation of a subset of mRNAs involved in cell proliferation. This Mycosarcoma maydis (Corn smut fungus) protein is Eukaryotic translation initiation factor 3 subunit I.